The sequence spans 901 residues: Flowering time control protein FPA (901 aa).

3 consecutive RRM domains span residues 18–90, 95–166, and 206–281; these read NNLW…YARP, KSLW…FLRS, and KVLW…YSND. Positions 343–416 are disordered; that stretch reads VGKEPNWRRP…SVDGFTPMGV (74 aa). The region spanning 441–537 is the SPOC domain; that stretch reads WRGMIAKGGT…DDGTTLFLVP (97 aa). Positions 655 to 736 are disordered; it reads SQPAAPESHQ…YPPASNNPNY (82 aa). 2 stretches are compositionally biased toward polar residues: residues 664 to 682 and 700 to 716; these read QPMS…SNGL and HDAS…QYTP.

The protein belongs to the RRM Spen family. Expressed in roots, leaves, stems and flowers. Highest expression in flower stems and meristematic regions.

Its subcellular location is the nucleus. Plays a role in the regulation of flowering time in the autonomous flowering pathway by decreasing FLOWERING LOCUS C mRNA levels. Required for RNA-mediated chromatin silencing of a range of loci in the genome. Cotranscriptionally recognizes aberrant RNA and marks it for silencing. Controls alternative cleavage and polyadenylation on pre-mRNAs and antisense RNAs. Acts redundantly with FCA to prevent the expression of distally polyadenylated antisense RNAs at the FLC locus. This Arabidopsis thaliana (Mouse-ear cress) protein is Flowering time control protein FPA (FPA).